We begin with the raw amino-acid sequence, 151 residues long: Flagellar assembly factor FliW (151 aa).

It belongs to the FliW family. Interacts with translational regulator CsrA and flagellin(s).

It localises to the cytoplasm. Its function is as follows. Acts as an anti-CsrA protein, binds CsrA and prevents it from repressing translation of its target genes, one of which is flagellin. Binds to flagellin and participates in the assembly of the flagellum. The sequence is that of Flagellar assembly factor FliW from Lachnospira eligens (strain ATCC 27750 / DSM 3376 / VPI C15-48 / C15-B4) (Eubacterium eligens).